A 175-amino-acid chain; its full sequence is Translation initiation factor IF-3 (175 aa).

Belongs to the IF-3 family. In terms of assembly, monomer.

The protein localises to the cytoplasm. IF-3 binds to the 30S ribosomal subunit and shifts the equilibrium between 70S ribosomes and their 50S and 30S subunits in favor of the free subunits, thus enhancing the availability of 30S subunits on which protein synthesis initiation begins. The sequence is that of Translation initiation factor IF-3 from Blochmanniella floridana.